Here is a 324-residue protein sequence, read N- to C-terminus: uncharacterized protein (324 aa).

This is an uncharacterized protein from Borreliella burgdorferi (strain ATCC 35210 / DSM 4680 / CIP 102532 / B31) (Borrelia burgdorferi).